We begin with the raw amino-acid sequence, 241 residues long: Uridylate kinase (241 aa).

15 to 18 lines the ATP pocket; it reads KLSG. The interval 23 to 28 is involved in allosteric activation by GTP; the sequence is GSEGFG. Gly-57 serves as a coordination point for UMP. 2 residues coordinate ATP: Gly-58 and Arg-62. UMP-binding positions include Asp-77 and 138-145; that span reads TGNPFCTT. The ATP site is built by Thr-165, Tyr-171, and Asp-174.

The protein belongs to the UMP kinase family. Homohexamer.

It localises to the cytoplasm. It carries out the reaction UMP + ATP = UDP + ADP. It participates in pyrimidine metabolism; CTP biosynthesis via de novo pathway; UDP from UMP (UMPK route): step 1/1. Allosterically activated by GTP. Inhibited by UTP. Functionally, catalyzes the reversible phosphorylation of UMP to UDP. The chain is Uridylate kinase from Shewanella amazonensis (strain ATCC BAA-1098 / SB2B).